A 28-amino-acid chain; its full sequence is Cyclotide vodo I1 (28 aa).

Intrachain disulfides connect C4–C18, C8–C20, and C13–C25.

This is a cyclic peptide. Post-translationally, contains 3 disulfide bonds.

Its function is as follows. Probably participates in a plant defense mechanism. The polypeptide is Cyclotide vodo I1 (Viola odorata (Sweet violet)).